Here is a 625-residue protein sequence, read N- to C-terminus: tRNA uridine 5-carboxymethylaminomethyl modification enzyme MnmG (625 aa).

Residue 11-16 (GAGHAG) participates in FAD binding. 271–285 (GPRYCPSIETKIVTF) is an NAD(+) binding site.

It belongs to the MnmG family. Homodimer. Heterotetramer of two MnmE and two MnmG subunits. It depends on FAD as a cofactor.

The protein localises to the cytoplasm. In terms of biological role, NAD-binding protein involved in the addition of a carboxymethylaminomethyl (cmnm) group at the wobble position (U34) of certain tRNAs, forming tRNA-cmnm(5)s(2)U34. This Parabacteroides distasonis (strain ATCC 8503 / DSM 20701 / CIP 104284 / JCM 5825 / NCTC 11152) protein is tRNA uridine 5-carboxymethylaminomethyl modification enzyme MnmG.